Here is a 370-residue protein sequence, read N- to C-terminus: Anhydro-N-acetylmuramic acid kinase (370 aa).

Residue 13-20 coordinates ATP; that stretch reads GTSMDGVD.

It belongs to the anhydro-N-acetylmuramic acid kinase family.

It carries out the reaction 1,6-anhydro-N-acetyl-beta-muramate + ATP + H2O = N-acetyl-D-muramate 6-phosphate + ADP + H(+). The protein operates within amino-sugar metabolism; 1,6-anhydro-N-acetylmuramate degradation. Its pathway is cell wall biogenesis; peptidoglycan recycling. In terms of biological role, catalyzes the specific phosphorylation of 1,6-anhydro-N-acetylmuramic acid (anhMurNAc) with the simultaneous cleavage of the 1,6-anhydro ring, generating MurNAc-6-P. Is required for the utilization of anhMurNAc either imported from the medium or derived from its own cell wall murein, and thus plays a role in cell wall recycling. This Vibrio vulnificus (strain YJ016) protein is Anhydro-N-acetylmuramic acid kinase.